We begin with the raw amino-acid sequence, 257 residues long: 3-oxo-5-alpha-steroid 4-dehydrogenase 1 (257 aa).

6 helical membrane-spanning segments follow: residues 7 to 27 (FLLDALAYLECALGVVCYVLL), 50 to 70 (AAWTVQELPSLALPLLACAGA), 84 to 104 (ILLAMFLVHYAQRSLVFPFLI), 109 to 129 (PMPLYAFLLAFIFCTYNGYLQ), 149 to 169 (FLTGSALWLIGMLINIHSDHV), and 208 to 228 (ALASWSIQGWAFAVFTFCVLF).

Belongs to the steroid 5-alpha reductase family.

The protein localises to the microsome membrane. It localises to the endoplasmic reticulum membrane. The catalysed reaction is a 3-oxo-5alpha-steroid + NADP(+) = a 3-oxo-Delta(4)-steroid + NADPH + H(+). It carries out the reaction 5alpha-pregnane-3,20-dione + NADP(+) = progesterone + NADPH + H(+). It catalyses the reaction 17beta-hydroxy-5alpha-androstan-3-one + NADP(+) = testosterone + NADPH + H(+). The enzyme catalyses androst-4-ene-3,17-dione + NADPH + H(+) = 5alpha-androstan-3,17-dione + NADP(+). In terms of biological role, converts testosterone into 5-alpha-dihydrotestosterone and progesterone or corticosterone into their corresponding 5-alpha-3-oxosteroids. It plays a central role in sexual differentiation and androgen physiology. In Bos taurus (Bovine), this protein is 3-oxo-5-alpha-steroid 4-dehydrogenase 1 (SRD5A1).